Here is a 113-residue protein sequence, read N- to C-terminus: U11-theraphotoxin-Hhn1l (113 aa).

The N-terminal stretch at 1–21 (MNTGRVTFLVVFLVAVSLGPA) is a signal peptide. Positions 22-74 (DKEENPMEMQEKTQQGKNYLNFGENLVVPKLEELKAKLVEKESKKSKNSRQKR) are excised as a propeptide. Cystine bridges form between Cys82-Cys95 and Cys89-Cys110.

Belongs to the neurotoxin 14 (magi-1) family. 01 (HNTX-16) subfamily. In terms of tissue distribution, expressed by the venom gland.

Its subcellular location is the secreted. In terms of biological role, probable ion channel inhibitor. The protein is U11-theraphotoxin-Hhn1l of Cyriopagopus hainanus (Chinese bird spider).